A 328-amino-acid chain; its full sequence is NADH-quinone oxidoreductase subunit H 1 (328 aa).

Transmembrane regions (helical) follow at residues 11 to 31, 81 to 101, 116 to 136, 154 to 174, 189 to 209, 235 to 257, 269 to 289, and 308 to 328; these read VVKAVVLALCVTLAVAVFLLF, LAPVIAFFCALGVWVVIPWAP, VLVILAIAAMGVYGTALGGWA, ISYELAMAMSLLGVILMTGSV, LFPQFLGFLVFYIASLAEAGW, GLFFLTELTHAVNSAVLSTTFFL, IPGFVWFLLKVILMVFVLYWI, and VLLPVAALNLVGTAIYVALWA.

The protein belongs to the complex I subunit 1 family. NDH-1 is composed of 14 different subunits. Subunits NuoA, H, J, K, L, M, N constitute the membrane sector of the complex.

The protein localises to the cell membrane. The catalysed reaction is a quinone + NADH + 5 H(+)(in) = a quinol + NAD(+) + 4 H(+)(out). Its function is as follows. NDH-1 shuttles electrons from NADH, via FMN and iron-sulfur (Fe-S) centers, to quinones in the respiratory chain. The immediate electron acceptor for the enzyme in this species is believed to be ubiquinone. Couples the redox reaction to proton translocation (for every two electrons transferred, four hydrogen ions are translocated across the cytoplasmic membrane), and thus conserves the redox energy in a proton gradient. This subunit may bind ubiquinone. This Symbiobacterium thermophilum (strain DSM 24528 / JCM 14929 / IAM 14863 / T) protein is NADH-quinone oxidoreductase subunit H 1.